The following is a 364-amino-acid chain: Small ribosomal subunit biogenesis GTPase RsgA (364 aa).

One can recognise a CP-type G domain in the interval 101–264 (KGLVEKPGVP…VIDTPGLREL (164 aa)). GTP-binding positions include 154–157 (NKSD) and 206–214 (GSSGAGKST). Residues Cys288, Cys293, His295, and Cys301 each contribute to the Zn(2+) site. The interval 339–364 (QVAQKRKRKTIPRQGKRWRREHGDGQ) is disordered. The span at 342–358 (QKRKRKTIPRQGKRWRR) shows a compositional bias: basic residues.

This sequence belongs to the TRAFAC class YlqF/YawG GTPase family. RsgA subfamily. In terms of assembly, monomer. Associates with 30S ribosomal subunit, binds 16S rRNA. Zn(2+) is required as a cofactor.

It is found in the cytoplasm. One of several proteins that assist in the late maturation steps of the functional core of the 30S ribosomal subunit. Helps release RbfA from mature subunits. May play a role in the assembly of ribosomal proteins into the subunit. Circularly permuted GTPase that catalyzes slow GTP hydrolysis, GTPase activity is stimulated by the 30S ribosomal subunit. This Syntrophotalea carbinolica (strain DSM 2380 / NBRC 103641 / GraBd1) (Pelobacter carbinolicus) protein is Small ribosomal subunit biogenesis GTPase RsgA.